Reading from the N-terminus, the 160-residue chain is Transcription factor 12 (160 aa).

Residues 1–58 (NKEKDENLHEPPSSDDMKSDDESSQKDIKVSSRGRTSTNEDEDLNPEQKIEREKERRM) are disordered. Basic and acidic residues predominate over residues 15-30 (DDMKSDDESSQKDIKV). Ser19 is modified (phosphoserine). Lys29 participates in a covalent cross-link: Glycyl lysine isopeptide (Lys-Gly) (interchain with G-Cter in SUMO2). Thr36 is modified (phosphothreonine). Ser37 carries the phosphoserine modification. The span at 46 to 58 (PEQKIEREKERRM) shows a compositional bias: basic and acidic residues. The bHLH domain maps to 55–108 (ERRMANNARERLRVRDINEAFKELGRMCQLHLKSEKPQTKLLILHQAVAVILSL). Residues Lys87 and Lys131 each participate in a glycyl lysine isopeptide (Lys-Gly) (interchain with G-Cter in SUMO2) cross-link. The tract at residues 110–133 (QQVRERNLNPKAACLKRREEEKVS) is class A specific domain. Residues 132–160 (VSVVSAEPPTTLPGTHPGLSETTNPMGHM) are disordered. Residues 139–150 (PPTTLPGTHPGL) are compositionally biased toward low complexity. Positions 151-160 (SETTNPMGHM) are enriched in polar residues.

In terms of assembly, efficient DNA binding requires dimerization with another bHLH protein. Forms homo- or heterooligomers with myogenin, E12 and ITF2 proteins. Interacts with PTF1A. Interacts with RUNX1T1. Interacts with NEUROD2. Interacts with BHLHA9.

It is found in the nucleus. In terms of biological role, transcriptional regulator. Involved in the initiation of neuronal differentiation. Activates transcription by binding to the E box (5'-CANNTG-3'). May be involved in the functional network that regulates the development of the GnRH axis. The polypeptide is Transcription factor 12 (TCF12) (Papio hamadryas (Hamadryas baboon)).